The sequence spans 332 residues: Casein kinase II subunit alpha (332 aa).

Positions 34–319 (YEVVRKVGRG…ALEAMTHPYF (286 aa)) constitute a Protein kinase domain. ATP contacts are provided by residues 40–48 (VGRGKYSEV) and K63. The Proton acceptor role is filled by D151.

Belongs to the protein kinase superfamily. Ser/Thr protein kinase family. CK2 subfamily. As to quaternary structure, tetramer of two alpha and two beta chains (possible).

The enzyme catalyses L-seryl-[protein] + ATP = O-phospho-L-seryl-[protein] + ADP + H(+). It carries out the reaction L-threonyl-[protein] + ATP = O-phospho-L-threonyl-[protein] + ADP + H(+). In terms of biological role, casein kinases are operationally defined by their preferential utilization of acidic proteins such as caseins as substrates. The alpha chain contains the catalytic site. In Zea mays (Maize), this protein is Casein kinase II subunit alpha (ACK2).